A 133-amino-acid chain; its full sequence is Small ribosomal subunit protein uS8 (133 aa).

This sequence belongs to the universal ribosomal protein uS8 family. In terms of assembly, part of the 30S ribosomal subunit. Contacts proteins S5 and S12.

Its function is as follows. One of the primary rRNA binding proteins, it binds directly to 16S rRNA central domain where it helps coordinate assembly of the platform of the 30S subunit. The protein is Small ribosomal subunit protein uS8 of Synechococcus elongatus (strain ATCC 33912 / PCC 7942 / FACHB-805) (Anacystis nidulans R2).